Reading from the N-terminus, the 197-residue chain is Inosine triphosphate pyrophosphatase (197 aa).

10 to 15 (TGNANK) is an ITP binding site. Glu-45 is a binding site for Mg(2+). Residues Lys-58, 76–77 (DT), Lys-93, 151–154 (FGWD), Lys-175, and 180–181 (HR) each bind ITP.

The protein belongs to the HAM1 NTPase family. Homodimer. It depends on Mg(2+) as a cofactor. Mn(2+) is required as a cofactor.

The protein localises to the cytoplasm. It is found in the nucleus. The catalysed reaction is ITP + H2O = IMP + diphosphate + H(+). It catalyses the reaction dITP + H2O = dIMP + diphosphate + H(+). It carries out the reaction XTP + H2O = XMP + diphosphate + H(+). The enzyme catalyses N(6)-hydroxy-dATP + H2O = N(6)-hydroxy-dAMP + diphosphate + H(+). In terms of biological role, pyrophosphatase that hydrolyzes the non-canonical purine nucleotides inosine triphosphate (ITP), deoxyinosine triphosphate (dITP) as well as 2'-deoxy-N-6-hydroxylaminopurine triphosphate (dHAPTP) and 5-bromodeoxyuridine 5'-triphosphate (BrdUTP) to their respective monophosphate derivatives. Xanthosine 5'-triphosphate (XTP) is also a potential substrate. The enzyme does not distinguish between the deoxy- and ribose forms. Probably excludes non-canonical purines from RNA and DNA precursor pools, thus preventing their incorporation into RNA and DNA and avoiding chromosomal lesions. The sequence is that of Inosine triphosphate pyrophosphatase from Saccharomyces cerevisiae (strain ATCC 204508 / S288c) (Baker's yeast).